A 350-amino-acid chain; its full sequence is Bifunctional nitrilase/nitrile hydratase NIT4B (350 aa).

Residues 30-302 (VRATVVQAST…EALISADLDL (273 aa)) form the CN hydrolase domain. Glu-70 functions as the Proton acceptor in the catalytic mechanism. Residue Lys-157 is part of the active site. Residue Cys-191 is the Nucleophile of the active site.

It belongs to the carbon-nitrogen hydrolase superfamily. Nitrilase family. In terms of tissue distribution, highly expressed in leaves and cotyledons, lower expression in stems and roots.

It carries out the reaction L-asparagine = 3-cyano-L-alanine + H2O. The enzyme catalyses 3-cyano-L-alanine + 2 H2O = L-aspartate + NH4(+). Functionally, involved in the cyanide detoxification pathway. Has nitrilase and nitrile-hydratase activity in the ratio 3.3:1, producing both asparagine and aspartic acid from beta-cyano-L-alanine (Ala(CN)). Can also use 3-phenylpropionitrile as substrate, but not indole-3-acetonitrile. This is Bifunctional nitrilase/nitrile hydratase NIT4B (NIT4B) from Lupinus angustifolius (Narrow-leaved blue lupine).